The sequence spans 343 residues: Olfactory receptor 6K6 (343 aa).

The Extracellular portion of the chain corresponds to 1 to 53; sequence MKQYSVGNQHSNYRSLLFPFLCSQMTQLTASGNQTMVTEFLFSMFPHAHRGGL. Residue N33 is glycosylated (N-linked (GlcNAc...) asparagine). The chain crosses the membrane as a helical span at residues 54 to 74; that stretch reads LFFIPLLLIYGFILTGNLIMF. At 75 to 82 the chain is on the cytoplasmic side; sequence IVIQVGMA. Residues 83-103 traverse the membrane as a helical segment; that stretch reads LHTPLYFFISVLSFLEICYTT. At 104-127 the chain is on the extracellular side; that stretch reads TTIPKMLSCLISEQKSISVAGCLL. A disulfide bridge connects residues C125 and C217. A helical membrane pass occupies residues 128-148; it reads QMYFFHSLGITESCVLTAMAI. Topologically, residues 149 to 167 are cytoplasmic; the sequence is DRYIAICNPLRYPTIMIPK. A helical transmembrane segment spans residues 168–188; that stretch reads LCIQLTVGSCFCGFLLVLPEI. Residues 189–224 are Extracellular-facing; that stretch reads AWISTLPFCGSNQIHQIFCDFTPVLSLACTDTFLVV. Residues 225–244 traverse the membrane as a helical segment; that stretch reads IVDAIHAAEIVASFLVIALS. Residues 245 to 264 are Cytoplasmic-facing; it reads YIRIIIVILGMHSAEGHHKA. A helical membrane pass occupies residues 265-285; the sequence is FSTCAAHLAVFLLFFGSVAVM. Residues 286–298 lie on the Extracellular side of the membrane; that stretch reads YLRFSATYSVFWD. The chain crosses the membrane as a helical span at residues 299–319; sequence TAIAVTFVILAPFFNPIIYSL. Over 320–343 the chain is Cytoplasmic; that stretch reads KNKDMKEAIGRLFHYQKRAGWAGK.

This sequence belongs to the G-protein coupled receptor 1 family.

Its subcellular location is the cell membrane. Functionally, odorant receptor. This is Olfactory receptor 6K6 (OR6K6) from Homo sapiens (Human).